We begin with the raw amino-acid sequence, 397 residues long: CCA-adding enzyme (397 aa).

The ATP site is built by G26 and R29. Residues G26 and R29 each coordinate CTP. Positions 39 and 41 each coordinate Mg(2+). Residues R110, D153, R156, R159, and R162 each contribute to the ATP site. Positions 110, 153, 156, 159, and 162 each coordinate CTP.

Belongs to the tRNA nucleotidyltransferase/poly(A) polymerase family. Bacterial CCA-adding enzyme type 3 subfamily. In terms of assembly, homodimer. Requires Mg(2+) as cofactor.

The catalysed reaction is a tRNA precursor + 2 CTP + ATP = a tRNA with a 3' CCA end + 3 diphosphate. It catalyses the reaction a tRNA with a 3' CCA end + 2 CTP + ATP = a tRNA with a 3' CCACCA end + 3 diphosphate. Its function is as follows. Catalyzes the addition and repair of the essential 3'-terminal CCA sequence in tRNAs without using a nucleic acid template. Adds these three nucleotides in the order of C, C, and A to the tRNA nucleotide-73, using CTP and ATP as substrates and producing inorganic pyrophosphate. tRNA 3'-terminal CCA addition is required both for tRNA processing and repair. Also involved in tRNA surveillance by mediating tandem CCA addition to generate a CCACCA at the 3' terminus of unstable tRNAs. While stable tRNAs receive only 3'-terminal CCA, unstable tRNAs are marked with CCACCA and rapidly degraded. This is CCA-adding enzyme from Bacillus cereus (strain AH187).